A 109-amino-acid chain; its full sequence is Profilin (109 aa).

Belongs to the profilin family. As to quaternary structure, multimer. Occurs in many kinds of cells as a complex with monomeric actin in a 1:1 ratio.

It is found in the cytoplasm. The protein localises to the cytoskeleton. Functionally, binds to actin and affects the structure of the cytoskeleton. At high concentrations, profilin prevents the polymerization of actin, whereas it enhances it at low concentrations. By binding to PIP2, it inhibits the formation of IP3 and DG. This is Profilin from Actinidia deliciosa (Kiwi).